Consider the following 184-residue polypeptide: Leucine-rich repeat-containing protein 20 (184 aa).

LRR repeat units lie at residues 51 to 72 (QIHL…FMTT), 75 to 96 (QLRE…VSAL), 98 to 120 (HLKA…TALP), 121 to 141 (ALET…EKLA), and 145 to 167 (ALRS…APPL). Serine 175 carries the post-translational modification Phosphoserine.

This Homo sapiens (Human) protein is Leucine-rich repeat-containing protein 20 (LRRC20).